A 404-amino-acid polypeptide reads, in one-letter code: Argininosuccinate synthase (404 aa).

ATP contacts are provided by residues 10–18 (AYSGGLDTS) and Ala37. 2 residues coordinate L-citrulline: Tyr90 and Ser95. Position 120 (Gly120) interacts with ATP. Thr122, Asn126, and Asp127 together coordinate L-aspartate. Asn126 provides a ligand contact to L-citrulline. Arg130, Ser181, Ser190, Glu266, and Tyr278 together coordinate L-citrulline. Positions 173–200 (DKRGESPFSTDANLLHTSSEGKVLEDPW) are disordered. Over residues 179–192 (PFSTDANLLHTSSE) the composition is skewed to polar residues.

Belongs to the argininosuccinate synthase family. Type 1 subfamily. Homotetramer.

The protein resides in the cytoplasm. The catalysed reaction is L-citrulline + L-aspartate + ATP = 2-(N(omega)-L-arginino)succinate + AMP + diphosphate + H(+). The protein operates within amino-acid biosynthesis; L-arginine biosynthesis; L-arginine from L-ornithine and carbamoyl phosphate: step 2/3. In Novosphingobium aromaticivorans (strain ATCC 700278 / DSM 12444 / CCUG 56034 / CIP 105152 / NBRC 16084 / F199), this protein is Argininosuccinate synthase.